A 121-amino-acid polypeptide reads, in one-letter code: Acidic phospholipase A2 PLA-2 (121 aa).

7 disulfides stabilise this stretch: Cys-26–Cys-115, Cys-28–Cys-44, Cys-43–Cys-95, Cys-49–Cys-121, Cys-50–Cys-88, Cys-57–Cys-81, and Cys-75–Cys-86. Residues Tyr-27, Gly-29, and Gly-31 each coordinate Ca(2+). His-47 is an active-site residue. Position 48 (Asp-48) interacts with Ca(2+). Asp-89 is a catalytic residue.

The protein belongs to the phospholipase A2 family. Group II subfamily. D49 sub-subfamily. It depends on Ca(2+) as a cofactor. As to expression, expressed by the venom gland.

The protein resides in the secreted. The catalysed reaction is a 1,2-diacyl-sn-glycero-3-phosphocholine + H2O = a 1-acyl-sn-glycero-3-phosphocholine + a fatty acid + H(+). Functionally, PLA2 catalyzes the calcium-dependent hydrolysis of the 2-acyl groups in 3-sn-phosphoglycerides. The sequence is that of Acidic phospholipase A2 PLA-2 from Eristicophis macmahoni (Leaf-nosed viper).